Here is a 754-residue protein sequence, read N- to C-terminus: Polycomb protein mes-3 (754 aa).

The segment at 1-83 (MTPATAEVKV…PTKLENIQKT (83 aa)) is disordered. Residues 31–40 (ARREEEKENL) are compositionally biased toward basic and acidic residues. The span at 51 to 61 (SSEAGSSRESS) shows a compositional bias: low complexity.

As to quaternary structure, forms a heterotrimeric complex with the Polycomb proteins mes-2 and mes-3. Does not interact with mes-4. Interacts with nyfa-1. In terms of tissue distribution, in adults, it is predominantly expressed in the germline, and weakly expressed in intestinal cells.

Its subcellular location is the nucleus. In terms of biological role, component of a Polycomb group (PcG) complex. PcG proteins act by forming multiprotein complexes, which are required to maintain the transcriptionally repressive state of homeotic genes throughout development. In association with the nfya-1-NF-Y complex, may play a role in repressing the expression of the homeobox protein egl-5 in tissues such as the head. PcG proteins are not required to initiate repression, but to maintain it during later stages of development. The mes-2/mes-3/mes-6 complex may participate in the global inactivation of the X chromosomes in germline cells. The complex may act via methylation of histone H3 'Lys-27', rendering chromatin heritably changed in its expressibility. This complex is required to exclude mes-4 from the inactivated X-chromosomes in germline cells. The polypeptide is Polycomb protein mes-3 (Caenorhabditis elegans).